A 191-amino-acid polypeptide reads, in one-letter code: Peptidyl-tRNA hydrolase (191 aa).

TRNA is bound at residue Y14. The active-site Proton acceptor is the H19. Y64, N66, and N112 together coordinate tRNA.

This sequence belongs to the PTH family. As to quaternary structure, monomer.

The protein resides in the cytoplasm. The catalysed reaction is an N-acyl-L-alpha-aminoacyl-tRNA + H2O = an N-acyl-L-amino acid + a tRNA + H(+). In terms of biological role, hydrolyzes ribosome-free peptidyl-tRNAs (with 1 or more amino acids incorporated), which drop off the ribosome during protein synthesis, or as a result of ribosome stalling. Catalyzes the release of premature peptidyl moieties from peptidyl-tRNA molecules trapped in stalled 50S ribosomal subunits, and thus maintains levels of free tRNAs and 50S ribosomes. In Clostridium botulinum (strain Alaska E43 / Type E3), this protein is Peptidyl-tRNA hydrolase.